Consider the following 434-residue polypeptide: uncharacterized protein (434 aa).

The 59-residue stretch at 4-62 folds into the TRAM domain; that stretch reads LLTIHTQVEGEITALAFGGAGILRYHGFVIFVPFTAPGDQIICRIIEIKKSFAVAELVK. [4Fe-4S] cluster contacts are provided by Cys-75, Cys-81, Cys-84, and Cys-161. S-adenosyl-L-methionine contacts are provided by Gln-266, Tyr-295, Glu-316, and Asn-364. Residue Cys-391 is the Nucleophile of the active site.

This sequence belongs to the class I-like SAM-binding methyltransferase superfamily. RNA M5U methyltransferase family.

This is an uncharacterized protein from Protochlamydia amoebophila (strain UWE25).